The sequence spans 193 residues: Peptidyl-tRNA hydrolase (193 aa).

Tyr17 lines the tRNA pocket. The Proton acceptor role is filled by His22. TRNA is bound by residues Tyr68, Asn70, and Asn116.

The protein belongs to the PTH family. As to quaternary structure, monomer.

The protein localises to the cytoplasm. It catalyses the reaction an N-acyl-L-alpha-aminoacyl-tRNA + H2O = an N-acyl-L-amino acid + a tRNA + H(+). Its function is as follows. Hydrolyzes ribosome-free peptidyl-tRNAs (with 1 or more amino acids incorporated), which drop off the ribosome during protein synthesis, or as a result of ribosome stalling. In terms of biological role, catalyzes the release of premature peptidyl moieties from peptidyl-tRNA molecules trapped in stalled 50S ribosomal subunits, and thus maintains levels of free tRNAs and 50S ribosomes. This Chromobacterium violaceum (strain ATCC 12472 / DSM 30191 / JCM 1249 / CCUG 213 / NBRC 12614 / NCIMB 9131 / NCTC 9757 / MK) protein is Peptidyl-tRNA hydrolase.